We begin with the raw amino-acid sequence, 899 residues long: MTDVTVKSLAAEIQTPVDRLIQQFADAGMTKSASDAVTQHEKETLLAHLNRDRGNAQGKLTLQRKTRSTLNVPSTGGKSKSVQIEVRKTRTYVKRDPIDAQQAEEEEQARREAEEQAQRAAEEQAKREAELREAAEKAKRAADEQAKREAAEKAKRDVAEKEKVTNQQNENMTKPAQAEKAKREAEAAELKRKAEEAARLKVEEEARRIAEEARRMAEENAGRWEAESAKPEESADYHVTTSHHAREAEDENDRQVEGERRSRSRAGKVTKQKKGNRQSESKADREEARAVTRGGKGKRKPSSLQQSFNKPVQAVNRDVVIGETVTVAELANKMAVKGSQVIKVMMKLGAMATINQVIDQETAQLVAEEMGHKVILRRENELEEAVMSDRDTGVAAEARAPVVTIMGHVDHGKTSLLDYIRSTKVAAGEAGGITQHIGAYHVETDNGMITFLDTPGHAAFTAMRARGAQATDIVVLVVAADDGVMPQTIEAIQHAKAAQVPVVVAVNKIDKPEADPDRVKTELSQYGVMPEEWGGESQFVHVSAKAGTGIDELLDAILLQAEVLELKAVRSGMANGVVIESFLDKGRGPVATVLVREGTLNKGDIVLCGFEYGRVRAMRDELGREITSAGPSIPVEILGMSGVPAAGDEATVVRDEKKAREVALYRQGKFREVKLARQQKSKLENMFANMTEGEVSELNIVLKSDVQGSCEAISDSLQKLSTDEVKVKIVGSGVGGITETDATLAAASNAIILGFNVRADASARRIVESESLDLRYYSVIYDLLDEVKQAMSGMLAPEYKQEIIGLAEVRDVFKSPKFGAIAGCMVTEGIVKRHNKIRVLRDNVVIYEGELESLRRFKDDVNEVRNGMECGIGVKNYNDVRPGDMIEVFETIEIKRTIA.

Disordered regions lie at residues 65–84 (KTRS…SVQI) and 91–310 (TYVK…SFNK). Residues 68–82 (STLNVPSTGGKSKSV) show a composition bias toward polar residues. Residues 108 to 164 (QARREAEEQAQRAAEEQAKREAELREAAEKAKRAADEQAKREAAEKAKRDVAEKEKV) show a composition bias toward basic and acidic residues. Over residues 165-174 (TNQQNENMTK) the composition is skewed to polar residues. Basic and acidic residues predominate over residues 177–236 (QAEKAKREAEAAELKRKAEEAARLKVEEEARRIAEEARRMAEENAGRWEAESAKPEESAD). Basic residues predominate over residues 262-276 (SRSRAGKVTKQKKGN). Residues 277–290 (RQSESKADREEARA) show a composition bias toward basic and acidic residues. One can recognise a tr-type G domain in the interval 398 to 567 (ARAPVVTIMG…LLQAEVLELK (170 aa)). Residues 407–414 (GHVDHGKT) are G1. GTP is bound at residue 407 to 414 (GHVDHGKT). The tract at residues 432 to 436 (GITQH) is G2. Residues 453–456 (DTPG) form a G3 region. Residues 453–457 (DTPGH) and 507–510 (NKID) contribute to the GTP site. Residues 507-510 (NKID) are G4. Positions 543 to 545 (SAK) are G5.

Belongs to the TRAFAC class translation factor GTPase superfamily. Classic translation factor GTPase family. IF-2 subfamily.

It is found in the cytoplasm. In terms of biological role, one of the essential components for the initiation of protein synthesis. Protects formylmethionyl-tRNA from spontaneous hydrolysis and promotes its binding to the 30S ribosomal subunits. Also involved in the hydrolysis of GTP during the formation of the 70S ribosomal complex. The chain is Translation initiation factor IF-2 from Pectobacterium carotovorum subsp. carotovorum (strain PC1).